Consider the following 486-residue polypeptide: tRNA (uracil-5-)-methyltransferase homolog B (486 aa).

3 residues coordinate S-adenosyl-L-methionine: glutamine 305, glutamate 355, and asparagine 405. Cysteine 433 serves as the catalytic Nucleophile. Catalysis depends on glutamate 479, which acts as the Proton acceptor.

Belongs to the class I-like SAM-binding methyltransferase superfamily. RNA M5U methyltransferase family.

The protein resides in the mitochondrion matrix. The catalysed reaction is uridine(54) in tRNA + S-adenosyl-L-methionine = 5-methyluridine(54) in tRNA + S-adenosyl-L-homocysteine + H(+). It catalyses the reaction a uridine in 12S rRNA + S-adenosyl-L-methionine = a 5-methyluridine in 12S rRNA + S-adenosyl-L-homocysteine + H(+). Functionally, mitochondrial S-adenosyl-L-methionine-dependent methyltransferase that catalyzes the formation of 5-methyl-uridine in tRNAs and 12S rRNA. Catalyzes the methylation of uridine at position 54 (m5U54) in all tRNAs. Specifically methylates the uridine in position 429 of 12S rRNA (m5U429). Does not affect RNA stability or mitochondrial translation. In Pongo abelii (Sumatran orangutan), this protein is tRNA (uracil-5-)-methyltransferase homolog B (TRMT2B).